We begin with the raw amino-acid sequence, 627 residues long: Probable inactive receptor kinase At3g02880 (627 aa).

The signal sequence occupies residues 1-23 (MKYKRKLSLSVVFLFVFYLAAVT). LRR repeat units follow at residues 91–112 (QLKT…DFSN), 115–137 (LLRY…LFTL), 139–161 (SIIR…VNSA), 163–184 (RLVT…ITLP), and 185–206 (LQQF…LSSW). The tract at residues 222–246 (DTCEAESPNGGDAGGPNTPPEKKDS) is disordered. A helical transmembrane segment spans residues 253–273 (AIVGIVIGCVVGLLLLLLILF). The Protein kinase domain maps to 345-620 (KASAEVLGKG…LIEEVSHSSG (276 aa)). Phosphoserine is present on S347. Residues 351–359 (LGKGTVGSS) and K373 contribute to the ATP site. A helical membrane pass occupies residues 389–409 (LHVLGSMSHANLVTLIAYYFS). S424 carries the phosphoserine modification. T444 bears the Phosphothreonine mark. The residue at position 519 (S519) is a Phosphoserine. Residue T595 is modified to Phosphothreonine. A phosphoserine mark is found at S621 and S626.

The protein belongs to the protein kinase superfamily. Ser/Thr protein kinase family.

The protein resides in the membrane. The protein is Probable inactive receptor kinase At3g02880 of Arabidopsis thaliana (Mouse-ear cress).